The primary structure comprises 508 residues: Phenylacetaldehyde synthase (508 aa).

Residues histidine 203 and histidine 318 each coordinate L-phenylalanine. Lysine 319 is subject to N6-(pyridoxal phosphate)lysine. Residue phenylalanine 348 participates in L-phenylalanine binding.

It belongs to the group II decarboxylase family. In terms of assembly, homotetramer. Pyridoxal 5'-phosphate is required as a cofactor.

It carries out the reaction L-phenylalanine + O2 + H2O + H(+) = 2-phenylacetaldehyde + H2O2 + NH4(+) + CO2. Functionally, bifunctional enzyme that catalyzes the decarboxylation of L-phenylalanine to produce 2-phenylethylamine, which is then oxidized to form 2-phenylacetaldehyde, a constituent of floral scent in petals. 2-phenylacetaldehyde is a precursor of 2-phenylethanol, another constituent of floral scent in petals. The sequence is that of Phenylacetaldehyde synthase from Rosa hybrid cultivar.